Here is a 263-residue protein sequence, read N- to C-terminus: 3-methyl-2-oxobutanoate hydroxymethyltransferase (263 aa).

Residues aspartate 43 and aspartate 82 each coordinate Mg(2+). Residues 43–44, aspartate 82, and lysine 111 each bind 3-methyl-2-oxobutanoate; that span reads DS. Glutamate 113 lines the Mg(2+) pocket. Glutamate 179 serves as the catalytic Proton acceptor.

It belongs to the PanB family. As to quaternary structure, homodecamer; pentamer of dimers. Requires Mg(2+) as cofactor.

Its subcellular location is the cytoplasm. It carries out the reaction 3-methyl-2-oxobutanoate + (6R)-5,10-methylene-5,6,7,8-tetrahydrofolate + H2O = 2-dehydropantoate + (6S)-5,6,7,8-tetrahydrofolate. It participates in cofactor biosynthesis; (R)-pantothenate biosynthesis; (R)-pantoate from 3-methyl-2-oxobutanoate: step 1/2. In terms of biological role, catalyzes the reversible reaction in which hydroxymethyl group from 5,10-methylenetetrahydrofolate is transferred onto alpha-ketoisovalerate to form ketopantoate. This chain is 3-methyl-2-oxobutanoate hydroxymethyltransferase, found in Neisseria meningitidis serogroup B (strain ATCC BAA-335 / MC58).